Reading from the N-terminus, the 63-residue chain is Arabinogalactan peptide 3 (63 aa).

The N-terminal stretch at 1-26 is a signal peptide; that stretch reads MASRILYAAAVVAAVAVSSLAGVAYA. Serine 36 is lipidated: GPI-anchor amidated serine. The propeptide at 37-63 is removed in mature form; it reads GAAAVSSSLVAAVLCPAVALLLGNLRQ.

The protein belongs to the AG-peptide AGP family. Post-translationally, O-glycosylated on hydroxyprolines; noncontiguous hydroxylproline residues are glycosylated with arabinogalactan. Expressed in roots, stems, leaves, flowers and seeds.

It is found in the vacuole. The protein localises to the aleurone grain membrane. Proteoglycan that seems to be implicated in diverse developmental roles such as differentiation, cell-cell recognition, embryogenesis and programmed cell death. This Oryza sativa subsp. japonica (Rice) protein is Arabinogalactan peptide 3 (AGPEP3).